Here is a 360-residue protein sequence, read N- to C-terminus: Phenylalanine--tRNA ligase alpha subunit (360 aa).

E260 is a Mg(2+) binding site.

The protein belongs to the class-II aminoacyl-tRNA synthetase family. Phe-tRNA synthetase alpha subunit type 1 subfamily. As to quaternary structure, tetramer of two alpha and two beta subunits. The cofactor is Mg(2+).

It is found in the cytoplasm. The enzyme catalyses tRNA(Phe) + L-phenylalanine + ATP = L-phenylalanyl-tRNA(Phe) + AMP + diphosphate + H(+). This chain is Phenylalanine--tRNA ligase alpha subunit, found in Bradyrhizobium sp. (strain BTAi1 / ATCC BAA-1182).